A 733-amino-acid polypeptide reads, in one-letter code: Phosphoribosylformylglycinamidine synthase subunit PurL (733 aa).

The active site involves His-41. Positions 44 and 83 each coordinate ATP. A Mg(2+)-binding site is contributed by Glu-85. Residues 86-89 and Arg-108 each bind substrate; that span reads SHNH. Catalysis depends on His-87, which acts as the Proton acceptor. Asp-109 is a binding site for Mg(2+). The disordered stretch occupies residues 212–232; that stretch reads GASFASQELSEESEEKRPSVQ. Residue Gln-232 participates in substrate binding. Residue Asp-260 participates in Mg(2+) binding. Substrate is bound at residue 304-306; the sequence is ESQ. ATP contacts are provided by Asp-488 and Gly-525. Asn-526 contacts Mg(2+). Ser-528 provides a ligand contact to substrate.

This sequence belongs to the FGAMS family. In terms of assembly, monomer. Part of the FGAM synthase complex composed of 1 PurL, 1 PurQ and 2 PurS subunits.

It is found in the cytoplasm. The catalysed reaction is N(2)-formyl-N(1)-(5-phospho-beta-D-ribosyl)glycinamide + L-glutamine + ATP + H2O = 2-formamido-N(1)-(5-O-phospho-beta-D-ribosyl)acetamidine + L-glutamate + ADP + phosphate + H(+). The protein operates within purine metabolism; IMP biosynthesis via de novo pathway; 5-amino-1-(5-phospho-D-ribosyl)imidazole from N(2)-formyl-N(1)-(5-phospho-D-ribosyl)glycinamide: step 1/2. Part of the phosphoribosylformylglycinamidine synthase complex involved in the purines biosynthetic pathway. Catalyzes the ATP-dependent conversion of formylglycinamide ribonucleotide (FGAR) and glutamine to yield formylglycinamidine ribonucleotide (FGAM) and glutamate. The FGAM synthase complex is composed of three subunits. PurQ produces an ammonia molecule by converting glutamine to glutamate. PurL transfers the ammonia molecule to FGAR to form FGAM in an ATP-dependent manner. PurS interacts with PurQ and PurL and is thought to assist in the transfer of the ammonia molecule from PurQ to PurL. In Thermoanaerobacter sp. (strain X514), this protein is Phosphoribosylformylglycinamidine synthase subunit PurL.